Here is a 462-residue protein sequence, read N- to C-terminus: Amino-acid permease AapA (462 aa).

Helical transmembrane passes span 27 to 47, 48 to 68, 96 to 116, 134 to 154, 160 to 180, 209 to 229, 252 to 272, 279 to 299, 343 to 363, 366 to 386, 410 to 430, and 435 to 455; these read LMAI…KSIH, FAGP…FFIM, AAFI…MADL, LPGL…VKLF, WFAL…ILLI, GFIL…LVGL, ILLF…WNVL, FVQV…NFVV, ALFF…LMPE, FTLI…ITVI, PLSN…LALA, and IALF…KVQT.

The protein belongs to the amino acid-polyamine-organocation (APC) superfamily.

The protein resides in the cell membrane. Probable amino-acid or metabolite transport protein. This Bacillus subtilis (strain 168) protein is Amino-acid permease AapA (aapA).